A 451-amino-acid chain; its full sequence is Phosphoglucosamine mutase (451 aa).

S102 acts as the Phosphoserine intermediate in catalysis. The Mg(2+) site is built by S102, D242, D244, and D246. Residue S102 is modified to Phosphoserine.

Belongs to the phosphohexose mutase family. It depends on Mg(2+) as a cofactor. Activated by phosphorylation.

The enzyme catalyses alpha-D-glucosamine 1-phosphate = D-glucosamine 6-phosphate. Catalyzes the conversion of glucosamine-6-phosphate to glucosamine-1-phosphate. The protein is Phosphoglucosamine mutase of Staphylococcus aureus (strain bovine RF122 / ET3-1).